Reading from the N-terminus, the 172-residue chain is Disulfide bond formation protein B (172 aa).

The Cytoplasmic segment spans residues 1–13 (MNWLAQLPTQRTP). Residues 14–30 (WLLFSGIVFLLEITALF) traverse the membrane as a helical segment. The Periplasmic portion of the chain corresponds to 31–48 (FQYKMGLAPCIMCIYQRT). Cys40 and Cys43 are disulfide-bonded. Residues 49-64 (AVLGLLIAGIIGTSNP) form a helical membrane-spanning segment. The Cytoplasmic segment spans residues 65–71 (EHRGVRL). The chain crosses the membrane as a helical span at residues 72–89 (LAYSVWAVSSVWGFIIAR). Residues 90 to 145 (EHIEMQTTTDPFAFSCEFEPNFPAFMPLHEWIPSFFAATGDCGNIDWQFAGLSMPA) lie on the Periplasmic side of the membrane. An intrachain disulfide couples Cys105 to Cys131. The helical transmembrane segment at 146-164 (WMEVIFALFAATLFLLVTS) threads the bilayer. The Cytoplasmic segment spans residues 165 to 172 (RLMTKRSL).

This sequence belongs to the DsbB family.

The protein localises to the cell inner membrane. Functionally, required for disulfide bond formation in some periplasmic proteins. Acts by oxidizing the DsbA protein. In Pseudoalteromonas translucida (strain TAC 125), this protein is Disulfide bond formation protein B.